The sequence spans 118 residues: Basic phospholipase A2 PA-10A (118 aa).

Intrachain disulfides connect Cys11–Cys71, Cys27–Cys117, Cys29–Cys45, Cys44–Cys98, Cys51–Cys91, Cys60–Cys84, and Cys78–Cys89. Residues Tyr28, Gly30, and Gly32 each coordinate Ca(2+). The active site involves His48. Position 49 (Asp49) interacts with Ca(2+). Residue Asp92 is part of the active site.

It belongs to the phospholipase A2 family. Group I subfamily. D49 sub-subfamily. Ca(2+) serves as cofactor. In terms of tissue distribution, expressed by the venom gland.

The protein localises to the secreted. It catalyses the reaction a 1,2-diacyl-sn-glycero-3-phosphocholine + H2O = a 1-acyl-sn-glycero-3-phosphocholine + a fatty acid + H(+). Functionally, PLA2 catalyzes the calcium-dependent hydrolysis of the 2-acyl groups in 3-sn-phosphoglycerides. The chain is Basic phospholipase A2 PA-10A from Pseudechis australis (Mulga snake).